We begin with the raw amino-acid sequence, 120 residues long: Large ribosomal subunit protein uL18 (120 aa).

Belongs to the universal ribosomal protein uL18 family. In terms of assembly, part of the 50S ribosomal subunit; part of the 5S rRNA/L5/L18/L25 subcomplex. Contacts the 5S and 23S rRNAs.

Its function is as follows. This is one of the proteins that bind and probably mediate the attachment of the 5S RNA into the large ribosomal subunit, where it forms part of the central protuberance. This chain is Large ribosomal subunit protein uL18, found in Halalkalibacterium halodurans (strain ATCC BAA-125 / DSM 18197 / FERM 7344 / JCM 9153 / C-125) (Bacillus halodurans).